The chain runs to 182 residues: ATP synthase subunit b, chloroplastic (182 aa).

The chain crosses the membrane as a helical span at residues 29 to 47 (IINLALLIVLVINVAKDVL).

The protein belongs to the ATPase B chain family. In terms of assembly, F-type ATPases have 2 components, F(1) - the catalytic core - and F(0) - the membrane proton channel. F(1) has five subunits: alpha(3), beta(3), gamma(1), delta(1), epsilon(1). F(0) has four main subunits: a(1), b(1), b'(1) and c(10-14). The alpha and beta chains form an alternating ring which encloses part of the gamma chain. F(1) is attached to F(0) by a central stalk formed by the gamma and epsilon chains, while a peripheral stalk is formed by the delta, b and b' chains.

The protein localises to the plastid. It localises to the chloroplast thylakoid membrane. In terms of biological role, f(1)F(0) ATP synthase produces ATP from ADP in the presence of a proton or sodium gradient. F-type ATPases consist of two structural domains, F(1) containing the extramembraneous catalytic core and F(0) containing the membrane proton channel, linked together by a central stalk and a peripheral stalk. During catalysis, ATP synthesis in the catalytic domain of F(1) is coupled via a rotary mechanism of the central stalk subunits to proton translocation. Functionally, component of the F(0) channel, it forms part of the peripheral stalk, linking F(1) to F(0). The sequence is that of ATP synthase subunit b, chloroplastic from Heterosigma akashiwo (strain NIES-293 / 8280G21-1).